The primary structure comprises 536 residues: Bifunctional purine biosynthesis protein PurH (536 aa).

In terms of domain architecture, MGS-like spans 8–158 (IPAPDEVRIQ…KNHAYVTIVT (151 aa)).

The protein belongs to the PurH family.

The catalysed reaction is (6R)-10-formyltetrahydrofolate + 5-amino-1-(5-phospho-beta-D-ribosyl)imidazole-4-carboxamide = 5-formamido-1-(5-phospho-D-ribosyl)imidazole-4-carboxamide + (6S)-5,6,7,8-tetrahydrofolate. It catalyses the reaction IMP + H2O = 5-formamido-1-(5-phospho-D-ribosyl)imidazole-4-carboxamide. It participates in purine metabolism; IMP biosynthesis via de novo pathway; 5-formamido-1-(5-phospho-D-ribosyl)imidazole-4-carboxamide from 5-amino-1-(5-phospho-D-ribosyl)imidazole-4-carboxamide (10-formyl THF route): step 1/1. The protein operates within purine metabolism; IMP biosynthesis via de novo pathway; IMP from 5-formamido-1-(5-phospho-D-ribosyl)imidazole-4-carboxamide: step 1/1. This chain is Bifunctional purine biosynthesis protein PurH, found in Sinorhizobium fredii (strain NBRC 101917 / NGR234).